Reading from the N-terminus, the 369-residue chain is 5-amino-6-(D-ribitylamino)uracil--L-tyrosine 4-hydroxyphenyl transferase (369 aa).

One can recognise a Radical SAM core domain in the interval 56-292 (VTFVVNRNIN…AVARLYFGPL (237 aa)). Residues Cys70, Cys74, and Cys77 each coordinate [4Fe-4S] cluster.

The protein belongs to the radical SAM superfamily. CofH family. In terms of assembly, consists of two subunits, CofG and CofH. Requires [4Fe-4S] cluster as cofactor.

It carries out the reaction 5-amino-6-(D-ribitylamino)uracil + L-tyrosine + S-adenosyl-L-methionine = 5-amino-5-(4-hydroxybenzyl)-6-(D-ribitylimino)-5,6-dihydrouracil + 2-iminoacetate + 5'-deoxyadenosine + L-methionine + H(+). The protein operates within cofactor biosynthesis; coenzyme F0 biosynthesis. In terms of biological role, catalyzes the radical-mediated synthesis of 5-amino-5-(4-hydroxybenzyl)-6-(D-ribitylimino)-5,6-dihydrouracil from 5-amino-6-(D-ribitylamino)uracil and L-tyrosine. This Methanopyrus kandleri (strain AV19 / DSM 6324 / JCM 9639 / NBRC 100938) protein is 5-amino-6-(D-ribitylamino)uracil--L-tyrosine 4-hydroxyphenyl transferase.